The following is a 201-amino-acid chain: Recombination protein RecR (201 aa).

The segment at 60 to 75 (CSCCGNVDTIDPCTVC) adopts a C4-type zinc-finger fold. The 96-residue stretch at 83-178 (AVIIVVEDVA…RITRLAHGVP (96 aa)) folds into the Toprim domain.

It belongs to the RecR family.

Its function is as follows. May play a role in DNA repair. It seems to be involved in an RecBC-independent recombinational process of DNA repair. It may act with RecF and RecO. This is Recombination protein RecR from Sinorhizobium medicae (strain WSM419) (Ensifer medicae).